A 490-amino-acid chain; its full sequence is Bifunctional IPC transferase and DIPP synthase (490 aa).

Positions 72–290 (LMKAVILAAG…RANRALVSAA (219 aa)) are mobA-like NTP transferase. CTP-binding positions include 78–80 (LAA), K91, D144, and E180. E180 provides a ligand contact to Mg(2+). Positions 291–490 (VKGSGDGFIS…VTLLAVLVSK (200 aa)) are CDP-alcohol phosphatidyltransferases. Transmembrane regions (helical) follow at residues 329–349 (FLVGAFSALASFFSIPLAGLL), 389–409 (FLAIIALLYPKTATVAMFAIF), 447–467 (IFLIMIFCLLSAISLQWIFWM), and 468–488 (FLFVAAISLTRVVVTLLAVLV).

It in the N-terminal section; belongs to the MobA family. The protein in the C-terminal section; belongs to the CDP-alcohol phosphatidyltransferase class-I family. Forms a mixture of monomers and dimers in solution, with prevalence of the monomeric form. Mg(2+) is required as a cofactor.

Its subcellular location is the membrane. The catalysed reaction is 1D-myo-inositol 3-phosphate + CTP + H(+) = CDP-1L-myo-inositol + diphosphate. It carries out the reaction CDP-1L-myo-inositol + 1D-myo-inositol 3-phosphate = bis(1L-myo-inositol) 3,1'-phosphate 1-phosphate + CMP + H(+). In terms of biological role, involved in biosynthesis of di-myo-inositol phosphate (DIP), a widespread organic solute in microorganisms adapted to hot environments. Catalyzes the condensation of CTP and L-myo-inositol-1-phosphate into CDP-L-myo-inositol, as well as the biosynthesis of di-myo-inositol-1,3'-phosphate-1'-phosphate (DIPP) from CDP-L-myo-inositol and L-myo-inositol-1-phosphate. The cytidylyltransferase is absolutely specific for CTP and L-myo-inositol-1-P. The DIPP synthase uses only L-myoinositol-1-phosphate as an alcohol acceptor, but CDP-glycerol, as well as CDP-L-myo-inositol and CDP-D-myoinositol, are recognized as alcohol donors. The chain is Bifunctional IPC transferase and DIPP synthase from Archaeoglobus fulgidus (strain ATCC 49558 / DSM 4304 / JCM 9628 / NBRC 100126 / VC-16).